Reading from the N-terminus, the 116-residue chain is Large ribosomal subunit protein bL19 (116 aa).

It belongs to the bacterial ribosomal protein bL19 family.

This protein is located at the 30S-50S ribosomal subunit interface and may play a role in the structure and function of the aminoacyl-tRNA binding site. This Clostridium botulinum (strain Eklund 17B / Type B) protein is Large ribosomal subunit protein bL19.